The chain runs to 194 residues: Protein GrpE (194 aa).

The span at 1-13 shows a compositional bias: polar residues; the sequence is MENTQENPTSQNP. Residues 1-50 form a disordered region; sequence MENTQENPTSQNPKPAEETARQAAEAAAPQQEAAANAATDSPASAEQAAL. Over residues 21–50 the composition is skewed to low complexity; sequence RQAAEAAAPQQEAAANAATDSPASAEQAAL.

The protein belongs to the GrpE family. As to quaternary structure, homodimer.

It is found in the cytoplasm. Functionally, participates actively in the response to hyperosmotic and heat shock by preventing the aggregation of stress-denatured proteins, in association with DnaK and GrpE. It is the nucleotide exchange factor for DnaK and may function as a thermosensor. Unfolded proteins bind initially to DnaJ; upon interaction with the DnaJ-bound protein, DnaK hydrolyzes its bound ATP, resulting in the formation of a stable complex. GrpE releases ADP from DnaK; ATP binding to DnaK triggers the release of the substrate protein, thus completing the reaction cycle. Several rounds of ATP-dependent interactions between DnaJ, DnaK and GrpE are required for fully efficient folding. The chain is Protein GrpE from Paraburkholderia xenovorans (strain LB400).